We begin with the raw amino-acid sequence, 957 residues long: Glycine dehydrogenase (decarboxylating) (957 aa).

Lys-708 is subject to N6-(pyridoxal phosphate)lysine.

It belongs to the GcvP family. The glycine cleavage system is composed of four proteins: P, T, L and H. Pyridoxal 5'-phosphate is required as a cofactor.

The enzyme catalyses N(6)-[(R)-lipoyl]-L-lysyl-[glycine-cleavage complex H protein] + glycine + H(+) = N(6)-[(R)-S(8)-aminomethyldihydrolipoyl]-L-lysyl-[glycine-cleavage complex H protein] + CO2. In terms of biological role, the glycine cleavage system catalyzes the degradation of glycine. The P protein binds the alpha-amino group of glycine through its pyridoxal phosphate cofactor; CO(2) is released and the remaining methylamine moiety is then transferred to the lipoamide cofactor of the H protein. The chain is Glycine dehydrogenase (decarboxylating) from Escherichia coli O17:K52:H18 (strain UMN026 / ExPEC).